A 399-amino-acid chain; its full sequence is 1-deoxy-D-xylulose 5-phosphate reductoisomerase (399 aa).

5 residues coordinate NADPH: threonine 10, glycine 11, serine 12, isoleucine 13, and asparagine 124. Position 125 (lysine 125) interacts with 1-deoxy-D-xylulose 5-phosphate. An NADPH-binding site is contributed by glutamate 126. Position 150 (aspartate 150) interacts with Mn(2+). Positions 151, 152, 186, and 209 each coordinate 1-deoxy-D-xylulose 5-phosphate. Glutamate 152 provides a ligand contact to Mn(2+). Glycine 215 contacts NADPH. 1-deoxy-D-xylulose 5-phosphate contacts are provided by serine 222, asparagine 227, lysine 228, and glutamate 231. Glutamate 231 contacts Mn(2+).

It belongs to the DXR family. The cofactor is Mg(2+). It depends on Mn(2+) as a cofactor.

The catalysed reaction is 2-C-methyl-D-erythritol 4-phosphate + NADP(+) = 1-deoxy-D-xylulose 5-phosphate + NADPH + H(+). It participates in isoprenoid biosynthesis; isopentenyl diphosphate biosynthesis via DXP pathway; isopentenyl diphosphate from 1-deoxy-D-xylulose 5-phosphate: step 1/6. Its function is as follows. Catalyzes the NADPH-dependent rearrangement and reduction of 1-deoxy-D-xylulose-5-phosphate (DXP) to 2-C-methyl-D-erythritol 4-phosphate (MEP). This Psychromonas ingrahamii (strain DSM 17664 / CCUG 51855 / 37) protein is 1-deoxy-D-xylulose 5-phosphate reductoisomerase.